The sequence spans 616 residues: Proline--tRNA ligase (616 aa).

Belongs to the class-II aminoacyl-tRNA synthetase family. ProS type 1 subfamily. In terms of assembly, homodimer.

It localises to the cytoplasm. It carries out the reaction tRNA(Pro) + L-proline + ATP = L-prolyl-tRNA(Pro) + AMP + diphosphate. Catalyzes the attachment of proline to tRNA(Pro) in a two-step reaction: proline is first activated by ATP to form Pro-AMP and then transferred to the acceptor end of tRNA(Pro). As ProRS can inadvertently accommodate and process non-cognate amino acids such as alanine and cysteine, to avoid such errors it has two additional distinct editing activities against alanine. One activity is designated as 'pretransfer' editing and involves the tRNA(Pro)-independent hydrolysis of activated Ala-AMP. The other activity is designated 'posttransfer' editing and involves deacylation of mischarged Ala-tRNA(Pro). The misacylated Cys-tRNA(Pro) is not edited by ProRS. The chain is Proline--tRNA ligase from Lactococcus lactis subsp. cremoris (strain SK11).